A 321-amino-acid chain; its full sequence is uncharacterized protein (321 aa).

In terms of domain architecture, HTH lacI-type spans 1–56; the sequence is MANIKDIAEKAGVSVTTVSRVINNHPYVSEDKRKRVFEAMESLEYTRNIHAVHLSK. The H-T-H motif DNA-binding region spans 4-23; it reads IKDIAEKAGVSVTTVSRVIN.

This is an uncharacterized protein from Bacillus subtilis (strain 168).